Consider the following 106-residue polypeptide: Large ribosomal subunit protein P2 (106 aa).

Residues 79 to 106 (GAGAVAEAKKEEPEEEEADDDMGFGLFD) are disordered. Residues 91-100 (PEEEEADDDM) are compositionally biased toward acidic residues.

It belongs to the eukaryotic ribosomal protein P1/P2 family. In terms of assembly, P1 and P2 exist as dimers at the large ribosomal subunit. Phosphorylated.

Its function is as follows. Plays an important role in the elongation step of protein synthesis. This chain is Large ribosomal subunit protein P2 (LIP), found in Leishmania infantum.